A 427-amino-acid chain; its full sequence is Retron Mx65 reverse transcriptase (427 aa).

Positions 136-366 (RHYSIHRPRE…GAQRVTGVTV (231 aa)) constitute a Reverse transcriptase domain. Positions 219, 315, and 316 each coordinate Mg(2+).

Belongs to the bacterial reverse transcriptase family.

The enzyme catalyses DNA(n) + a 2'-deoxyribonucleoside 5'-triphosphate = DNA(n+1) + diphosphate. Its function is as follows. Reverse transcriptase (RT) responsible for synthesis of msDNA-Mx65 (a branched molecule with RNA linked by a 2',5'-phosphodiester bond to ssDNA). The retron transcript serves as primer (from a conserved internal G residue) and template for the reaction, and codes for the RT. The retron is involved in antiviral defense. The sequence is that of Retron Mx65 reverse transcriptase from Myxococcus xanthus.